The chain runs to 415 residues: uncharacterized protein (415 aa).

Residues Cys-85, Cys-91, Cys-94, and Cys-175 each coordinate [4Fe-4S] cluster. S-adenosyl-L-methionine contacts are provided by Gln-248, Tyr-276, Glu-297, and Asn-344. Catalysis depends on Cys-371, which acts as the Nucleophile.

The protein belongs to the class I-like SAM-binding methyltransferase superfamily. RNA M5U methyltransferase family.

This is an uncharacterized protein from Leptospira interrogans serogroup Icterohaemorrhagiae serovar Lai (strain 56601).